The chain runs to 341 residues: Elongation factor Ts (341 aa).

The interval 80–83 (TDFV) is involved in Mg(2+) ion dislocation from EF-Tu.

This sequence belongs to the EF-Ts family.

The protein localises to the cytoplasm. Associates with the EF-Tu.GDP complex and induces the exchange of GDP to GTP. It remains bound to the aminoacyl-tRNA.EF-Tu.GTP complex up to the GTP hydrolysis stage on the ribosome. The sequence is that of Elongation factor Ts from Lactobacillus johnsonii (strain CNCM I-12250 / La1 / NCC 533).